A 236-amino-acid chain; its full sequence is Phosphoglycolate phosphatase (236 aa).

Catalysis depends on Asp-23, which acts as the Nucleophile. 2 residues coordinate Mg(2+): Asp-23 and Asp-25. Lys-162 is a binding site for substrate. Mg(2+) is bound by residues Asp-185 and Asp-189.

The protein belongs to the archaeal SPP-like hydrolase family. Mg(2+) is required as a cofactor.

The catalysed reaction is 2-phosphoglycolate + H2O = glycolate + phosphate. In terms of biological role, catalyzes the dephosphorylation of 2-phosphoglycolate. In Picrophilus torridus (strain ATCC 700027 / DSM 9790 / JCM 10055 / NBRC 100828 / KAW 2/3), this protein is Phosphoglycolate phosphatase.